The primary structure comprises 231 residues: ATP phosphoribosyltransferase (231 aa).

The protein belongs to the ATP phosphoribosyltransferase family. Short subfamily. Heteromultimer composed of HisG and HisZ subunits.

It is found in the cytoplasm. The catalysed reaction is 1-(5-phospho-beta-D-ribosyl)-ATP + diphosphate = 5-phospho-alpha-D-ribose 1-diphosphate + ATP. It participates in amino-acid biosynthesis; L-histidine biosynthesis; L-histidine from 5-phospho-alpha-D-ribose 1-diphosphate: step 1/9. Catalyzes the condensation of ATP and 5-phosphoribose 1-diphosphate to form N'-(5'-phosphoribosyl)-ATP (PR-ATP). Has a crucial role in the pathway because the rate of histidine biosynthesis seems to be controlled primarily by regulation of HisG enzymatic activity. The chain is ATP phosphoribosyltransferase from Sinorhizobium medicae (strain WSM419) (Ensifer medicae).